We begin with the raw amino-acid sequence, 836 residues long: ATP-binding cassette sub-family B member 6 (836 aa).

The Lumenal segment spans residues 1 to 26 (MVTVGNYCEAEGPAGPAWTQNGLSPC). The segment at 1-205 (MVTVGNYCEA…SGGLFILGLW (205 aa)) is required for the lysosomal targeting. The tract at residues 1–236 (MVTVGNYCEA…RNQGRSTDPR (236 aa)) is required for ATPase activity. A disulfide bond links cysteine 8 and cysteine 26. A helical membrane pass occupies residues 27–47 (FFYTLVPSTLMTLGVLALVLV). The Cytoplasmic segment spans residues 48–72 (LPCRRREVPAGTEELSWAAGPRVAP). A helical transmembrane segment spans residues 73-93 (YALQLSLAILQMALPLASLAG). At 94-106 (RVGTARGVRLPGY) the chain is on the lumenal side. The chain crosses the membrane as a helical span at residues 107-127 (LLLASVLESLASACGLWLLVV). Topologically, residues 128 to 147 (ERSQARQSLAMGVWMKFRHS) are cytoplasmic. The helical transmembrane segment at 148–168 (LGLLLLWTVTFAAENLVLVSW) threads the bilayer. Residues 169-185 (NSPQWWWSRADLGQQVQ) lie on the Lumenal side of the membrane. Residues 186-206 (FGLWVLRYMTSGGLFILGLWA) traverse the membrane as a helical segment. Residues 207–264 (PGLRPQSYTLHVNEEDQDGGRNQGRSTDPRSTWRDLGRKLRLLSGYLWPRGSPSLQLT) are Cytoplasmic-facing. A helical membrane pass occupies residues 265-285 (VLLCMGLMGLDRALNVLVPIF). The ABC transmembrane type-1 domain maps to 265 to 556 (VLLCMGLMGL…FGTYYRMIQT (292 aa)). At 286–305 (YRDIVNLLTSKAPWSSLAWT) the chain is on the lumenal side. A helical membrane pass occupies residues 306 to 326 (VTTYVFLKFLQGGGTGSTGFV). At 327-375 (SNLRTFLWIRVQQFTSRGVELRLFSHLHELSLRWHLGRRTGEVLRIVDR) the chain is on the cytoplasmic side. Residues 376–396 (GTSSVTGLLSYLVFNIIPTLA) traverse the membrane as a helical segment. Aspartate 397 is a topological domain (lumenal). A helical membrane pass occupies residues 398 to 418 (IIIGIIYFSMFFNAWFGLIVF). Residues 419–499 (LCMSLYLILT…STASLVLLNQ (81 aa)) are Cytoplasmic-facing. The helical transmembrane segment at 500–520 (TQNMVIGFGLLAGSLLCAYFV) threads the bilayer. Topologically, residues 521–529 (SERRLQVGD) are lumenal. A helical transmembrane segment spans residues 530-550 (FVLFGTYITQLYMPLNWFGTY). Residues 551–836 (YRMIQTNFID…QGQETVPEDS (286 aa)) lie on the Cytoplasmic side of the membrane. An ABC transporter domain is found at 590 to 824 (VEFENVHFSY…GGVYAEMWQL (235 aa)). ATP-binding positions include tyrosine 599 and 623 to 634 (GPSGAGKSTILR).

It belongs to the ABC transporter superfamily. ABCB family. Heavy Metal importer (TC 3.A.1.210) subfamily. As to quaternary structure, homodimer. N-glycosylated. In terms of tissue distribution, ubiquitously expressed. Highly expressed in testis by meiotic pachytene spermatocytes and post-meiotic early spermatids.

The protein resides in the cell membrane. It localises to the mitochondrion outer membrane. The protein localises to the endoplasmic reticulum membrane. Its subcellular location is the golgi apparatus membrane. It is found in the endosome membrane. The protein resides in the lysosome membrane. It localises to the late endosome membrane. The protein localises to the early endosome membrane. Its subcellular location is the secreted. It is found in the extracellular exosome. The protein resides in the mitochondrion. It localises to the endosome. The protein localises to the multivesicular body membrane. Its subcellular location is the melanosome membrane. The enzyme catalyses heme b(in) + ATP + H2O = heme b(out) + ADP + phosphate + H(+). The catalysed reaction is coproporphyrin III(in) + ATP + H2O = coproporphyrin III(out) + ADP + phosphate + H(+). It carries out the reaction pheophorbide a(in) + ATP + H2O = pheophorbide a(out) + ADP + phosphate + H(+). It catalyses the reaction coproporphyrinogen III(in) + ATP + H2O = coproporphyrinogen III(out) + ADP + phosphate + H(+). The enzyme catalyses protoporphyrin IX(in) + ATP + H2O = protoporphyrin IX(out) + ADP + phosphate + H(+). The catalysed reaction is coproporphyrin I(in) + ATP + H2O = coproporphyrin I(out) + ADP + phosphate + H(+). It carries out the reaction uroporphyrin I(in) + ATP + H2O = uroporphyrin I(out) + ADP + phosphate + H(+). It catalyses the reaction uroporphyrin III(in) + ATP + H2O = uroporphyrin III(out) + ADP + phosphate + H(+). ATP-dependent transporter that catalyzes the transport of a broad-spectrum of porphyrins from the cytoplasm to the extracellular space through the plasma membrane or into the vesicle lumen. May also function as an ATP-dependent importer of porphyrins from the cytoplasm into the mitochondria, in turn may participate in the de novo heme biosynthesis regulation and in the coordination of heme and iron homeostasis during phenylhydrazine stress. May play a key role in the early steps of melanogenesis producing PMEL amyloid fibrils. In vitro, it confers to cells a resistance to toxic metal such as arsenic and cadmium and against chemotherapeutics agent such as 5-fluorouracil, SN-38 and vincristin. In addition may play a role in the transition metal homeostasis. This chain is ATP-binding cassette sub-family B member 6, found in Rattus norvegicus (Rat).